Consider the following 160-residue polypeptide: Transcription antitermination protein NusB (160 aa).

The protein belongs to the NusB family.

Functionally, involved in transcription antitermination. Required for transcription of ribosomal RNA (rRNA) genes. Binds specifically to the boxA antiterminator sequence of the ribosomal RNA (rrn) operons. The chain is Transcription antitermination protein NusB from Chlamydia pneumoniae (Chlamydophila pneumoniae).